The sequence spans 282 residues: Pantothenate synthetase (282 aa).

ATP is bound at residue 30–37 (MGNLHDGH). Residue His37 is the Proton donor of the active site. (R)-pantoate is bound at residue Gln61. Gln61 contributes to the beta-alanine binding site. ATP is bound at residue 149 to 152 (GEKD). Gln155 lines the (R)-pantoate pocket. 186–189 (MSSR) contacts ATP.

The protein belongs to the pantothenate synthetase family. In terms of assembly, homodimer.

The protein localises to the cytoplasm. The enzyme catalyses (R)-pantoate + beta-alanine + ATP = (R)-pantothenate + AMP + diphosphate + H(+). Its pathway is cofactor biosynthesis; (R)-pantothenate biosynthesis; (R)-pantothenate from (R)-pantoate and beta-alanine: step 1/1. Catalyzes the condensation of pantoate with beta-alanine in an ATP-dependent reaction via a pantoyl-adenylate intermediate. This is Pantothenate synthetase from Alteromonas mediterranea (strain DSM 17117 / CIP 110805 / LMG 28347 / Deep ecotype).